A 239-amino-acid chain; its full sequence is Large ribosomal subunit protein uL1 (239 aa).

It belongs to the universal ribosomal protein uL1 family. In terms of assembly, part of the 50S ribosomal subunit.

Functionally, binds directly to 23S rRNA. The L1 stalk is quite mobile in the ribosome, and is involved in E site tRNA release. Its function is as follows. Protein L1 is also a translational repressor protein, it controls the translation of the L11 operon by binding to its mRNA. This chain is Large ribosomal subunit protein uL1, found in Rickettsia conorii (strain ATCC VR-613 / Malish 7).